We begin with the raw amino-acid sequence, 115 residues long: Large ribosomal subunit protein bL19 (115 aa).

Belongs to the bacterial ribosomal protein bL19 family.

In terms of biological role, this protein is located at the 30S-50S ribosomal subunit interface and may play a role in the structure and function of the aminoacyl-tRNA binding site. The sequence is that of Large ribosomal subunit protein bL19 from Streptococcus suis (strain 98HAH33).